The sequence spans 605 residues: Probable potassium transport system protein Kup 1 (605 aa).

Transmembrane regions (helical) follow at residues A16–F36, V46–A66, V97–I117, G138–V158, V166–V186, G212–L232, W248–T268, L287–I307, I339–F359, A368–F388, A397–K417, and I418–I438.

Belongs to the HAK/KUP transporter (TC 2.A.72) family.

Its subcellular location is the cell inner membrane. It carries out the reaction K(+)(in) + H(+)(in) = K(+)(out) + H(+)(out). Transport of potassium into the cell. Likely operates as a K(+):H(+) symporter. This Geobacter metallireducens (strain ATCC 53774 / DSM 7210 / GS-15) protein is Probable potassium transport system protein Kup 1.